A 413-amino-acid polypeptide reads, in one-letter code: Histidine decarboxylase (413 aa).

A substrate-binding site is contributed by histidine 129. At lysine 242 the chain carries N6-(pyridoxal phosphate)lysine.

The protein belongs to the group II decarboxylase family. Pyridoxal 5'-phosphate is required as a cofactor. In terms of tissue distribution, ripe fruits; not detected in leaves and unripe fruit.

The enzyme catalyses L-histidine + H(+) = histamine + CO2. The sequence is that of Histidine decarboxylase (HDC) from Solanum lycopersicum (Tomato).